The sequence spans 590 residues: L-gulonolactone oxidase 5 (590 aa).

Residues methionine 1–serine 31 form the signal peptide. The FAD-binding PCMH-type domain occupies serine 60–methionine 242.

The protein belongs to the oxygen-dependent FAD-linked oxidoreductase family. It depends on FAD as a cofactor.

The enzyme catalyses L-gulono-1,4-lactone + O2 = L-ascorbate + H2O2 + H(+). It participates in cofactor biosynthesis; L-ascorbate biosynthesis. Its function is as follows. Catalyzes the oxidation of L-gulono-1,4-lactone to ascorbic acid. L-gulono-1,4-lactone is oxidized to hydrogen peroxide and L-xylo-hexulonolactone which spontaneously isomerizes to L-ascorbate. In Arabidopsis thaliana (Mouse-ear cress), this protein is L-gulonolactone oxidase 5.